A 174-amino-acid chain; its full sequence is RNA pyrophosphohydrolase (174 aa).

The region spanning 6-149 (GYRPNVGIIL…KRDVYLGALK (144 aa)) is the Nudix hydrolase domain. Positions 38–59 (GGIKPGESPETAMYRELYEEVG) match the Nudix box motif.

The protein belongs to the Nudix hydrolase family. RppH subfamily. A divalent metal cation serves as cofactor.

Accelerates the degradation of transcripts by removing pyrophosphate from the 5'-end of triphosphorylated RNA, leading to a more labile monophosphorylated state that can stimulate subsequent ribonuclease cleavage. In Neisseria meningitidis serogroup C / serotype 2a (strain ATCC 700532 / DSM 15464 / FAM18), this protein is RNA pyrophosphohydrolase.